The chain runs to 1284 residues: Neuronal cell adhesion molecule (1284 aa).

The first 24 residues, 1–24 (MMKEKSISASKASLVFFLCQMISA), serve as a signal peptide directing secretion. At 25–1143 (LDVPLDSKLL…ASRQVDIATQ (1119 aa)) the chain is on the extracellular side. 6 Ig-like C2-type domains span residues 41 to 129 (PTIT…AAIS), 136 to 230 (PSRS…QPIS), 243 to 332 (PPVL…ISVT), 337 to 424 (PYWI…AFVN), 430 to 517 (PRIL…VQLE), and 521 to 608 (PTMI…AVLT). 2 cysteine pairs are disulfide-bonded: cysteine 63–cysteine 118 and cysteine 162–cysteine 213. The N-linked (GlcNAc...) asparagine glycan is linked to asparagine 78. Asparagine 218 and asparagine 290 each carry an N-linked (GlcNAc...) asparagine glycan. Intrachain disulfides connect cysteine 268-cysteine 316 and cysteine 358-cysteine 408. N-linked (GlcNAc...) asparagine glycans are attached at residues asparagine 409, asparagine 483, asparagine 576, asparagine 581, asparagine 595, and asparagine 692. 2 disulfides stabilise this stretch: cysteine 452–cysteine 501 and cysteine 543–cysteine 592. 5 Fibronectin type-III domains span residues 625 to 720 (PPLD…TKSA), 725 to 819 (NPSN…SGED), 824 to 926 (APGN…TPEG), 930 to 1026 (PPSF…IMDE), and 1040 to 1132 (QPLY…TGPA). Residues 707-731 (QPSEPSEQYLTKSANPDENPSNVQG) show a composition bias toward polar residues. Residues 707–732 (QPSEPSEQYLTKSANPDENPSNVQGI) are disordered. 9 N-linked (GlcNAc...) asparagine glycosylation sites follow: asparagine 778, asparagine 834, asparagine 885, asparagine 969, asparagine 985, asparagine 995, asparagine 1048, asparagine 1059, and asparagine 1091. A helical membrane pass occupies residues 1144–1166 (GWFIGLMCAVALLILILLIVCFI). Topologically, residues 1167 to 1284 (RRNKGGKYPV…SPVNAMNSFV (118 aa)) are cytoplasmic. Basic and acidic residues-rich tracts occupy residues 1175–1195 (PVKE…KEDD), 1202–1212 (RSLESDAEDHK), and 1221–1230 (PSDRTVKKED). Residues 1175-1284 (PVKEKEDAHA…SPVNAMNSFV (110 aa)) are disordered. A compositionally biased stretch (polar residues) spans 1268–1284 (NESSEAPSPVNAMNSFV).

It belongs to the immunoglobulin superfamily. L1/neurofascin/NgCAM family. As to quaternary structure, heterodimer of an alpha and a beta chain. As to expression, retina and developing brain.

The protein resides in the cell membrane. This protein is a cell adhesion molecule involved in neuron-neuron adhesion, neurite fasciculation, outgrowth of neurites, etc. Specifically involved in the development of optic fibres in the retina. The polypeptide is Neuronal cell adhesion molecule (Gallus gallus (Chicken)).